The sequence spans 147 residues: Ubiquitin-conjugating enzyme E2 D4 (147 aa).

The 147-residue stretch at 1 to 147 (MALKRIQKEL…AREWTQKYAM (147 aa)) folds into the UBC core domain. Residue C85 is the Glycyl thioester intermediate of the active site.

The protein belongs to the ubiquitin-conjugating enzyme family. As to quaternary structure, interacts with map3k10/mlk2. As to expression, at embryonic stages 28 to 35, expressed in the somites, eye primordia, otic vesicle and branchial arches. By stage 35, also weakly expressed in the pronephros.

It carries out the reaction S-ubiquitinyl-[E1 ubiquitin-activating enzyme]-L-cysteine + [E2 ubiquitin-conjugating enzyme]-L-cysteine = [E1 ubiquitin-activating enzyme]-L-cysteine + S-ubiquitinyl-[E2 ubiquitin-conjugating enzyme]-L-cysteine.. Its pathway is protein modification; protein ubiquitination. Catalyzes the covalent attachment of ubiquitin to other proteins. Regulates pronephros development, possibly by promoting ubiquitination and thus inactivation or degradation of map3k10/mlk2. The sequence is that of Ubiquitin-conjugating enzyme E2 D4 (ube2d4) from Xenopus laevis (African clawed frog).